The primary structure comprises 365 residues: Aspartate-semialdehyde dehydrogenase (365 aa).

Residues Thr-12, Gly-13, Ser-14, Val-15, Ser-37, Ser-40, Leu-85, and Asp-86 each coordinate NADP(+). The active-site Acyl-thioester intermediate is Cys-156. Gly-188 is a binding site for NADP(+). Catalysis depends on His-256, which acts as the Proton acceptor. Residue Asn-343 participates in NADP(+) binding.

The protein belongs to the aspartate-semialdehyde dehydrogenase family. As to quaternary structure, homotetramer; dimer of dimers.

It localises to the cytoplasm. It is found in the cytosol. The protein resides in the nucleus. It carries out the reaction L-aspartate 4-semialdehyde + phosphate + NADP(+) = 4-phospho-L-aspartate + NADPH + H(+). It participates in amino-acid biosynthesis; L-methionine biosynthesis via de novo pathway; L-homoserine from L-aspartate: step 2/3. The protein operates within amino-acid biosynthesis; L-threonine biosynthesis; L-threonine from L-aspartate: step 2/5. Its activity is regulated as follows. Inhibited by the non-competitive inhibitors phthalaldehyde and naphthalene, the competitive inhibitor 1,4-benzoquinone and derivates such as 2-chloro-3-methoxy-1,4-naphthoquinone, 2,3-dichloro-1,4-naphthoquinone, 2-chloro-1,4-naphthoquinone, 2-bromo-1,4-naphthoquinone and 2,3-dichloro-5,8-dihydroxy-1,4-naphthoquinone, and 5-aminoisoquinoline. Inhibited by vinyl sulfones. Its function is as follows. Catalyzes the NADPH-dependent formation of L-aspartate 4-semialdehyde (L-ASA) by the reductive dephosphorylation of 4-phospho-L-aspartate. Mediates the second step in the biosynthesis of amino acids that derive from aspartate (the aspartate family of amino acids), including methioinine and threonine, the latter of which is a precursor to isoleucine. In Candida albicans (strain SC5314 / ATCC MYA-2876) (Yeast), this protein is Aspartate-semialdehyde dehydrogenase.